The primary structure comprises 376 residues: Heme-dependent oxidative N-demethylase gamma subunit (376 aa).

As to quaternary structure, the heme-dependent oxidative N-demethylase (HODM) is a heterotetramer composed of a catalytic alpha subunit, a FMN/2Fe-2S-dependent oxidoreductase beta subunit, a gamma subunit with putative aminotransferase activity, and a delta subunit of unknown function.

Component of the heme-dependent oxidative N-demethylase (HODM) enzyme, that catalyzes the NADPH-dependent oxidation of dimethylamine (DMA) to methylamine (MA) and formaldehyde. Functions in bacterial methylated amine catabolism, linking alkylamine oxidation to the tetrahydrofolate C1 pool. The gamma subunit of HODM may act as an aminomethyltransferase involved in the detoxification of formaldehyde released by the alpha subunit; this process requires tetrahydrofolate (THF). The sequence is that of Heme-dependent oxidative N-demethylase gamma subunit from Ectopseudomonas mendocina (strain ymp) (Pseudomonas mendocina).